The following is a 544-amino-acid chain: CTP synthase (544 aa).

The amidoligase domain stretch occupies residues 1–265 (MTKFIFVTGG…DNIITEQLQL (265 aa)). Ser13 provides a ligand contact to CTP. Ser13 is a UTP binding site. Residues 14-19 (SLGKGI) and Asp71 contribute to the ATP site. Mg(2+) is bound by residues Asp71 and Glu139. Residues 146–148 (DIE), 186–191 (KTKPTQ), and Lys222 contribute to the CTP site. Residues 186-191 (KTKPTQ) and Lys222 contribute to the UTP site. The Glutamine amidotransferase type-1 domain maps to 290-544 (KIAMVGKYVD…VKAALNNKKA (255 aa)). Position 353 (Gly353) interacts with L-glutamine. The active-site Nucleophile; for glutamine hydrolysis is Cys380. L-glutamine contacts are provided by residues 381–384 (LGMQ), Glu404, and Arg471. Catalysis depends on residues His517 and Glu519.

It belongs to the CTP synthase family. In terms of assembly, homotetramer.

The catalysed reaction is UTP + L-glutamine + ATP + H2O = CTP + L-glutamate + ADP + phosphate + 2 H(+). The enzyme catalyses L-glutamine + H2O = L-glutamate + NH4(+). It catalyses the reaction UTP + NH4(+) + ATP = CTP + ADP + phosphate + 2 H(+). Its pathway is pyrimidine metabolism; CTP biosynthesis via de novo pathway; CTP from UDP: step 2/2. With respect to regulation, allosterically activated by GTP, when glutamine is the substrate; GTP has no effect on the reaction when ammonia is the substrate. The allosteric effector GTP functions by stabilizing the protein conformation that binds the tetrahedral intermediate(s) formed during glutamine hydrolysis. Inhibited by the product CTP, via allosteric rather than competitive inhibition. Catalyzes the ATP-dependent amination of UTP to CTP with either L-glutamine or ammonia as the source of nitrogen. Regulates intracellular CTP levels through interactions with the four ribonucleotide triphosphates. This Neisseria meningitidis serogroup B (strain ATCC BAA-335 / MC58) protein is CTP synthase.